The sequence spans 154 residues: UPF0178 protein SSP2038 (154 aa).

The protein belongs to the UPF0178 family.

This Staphylococcus saprophyticus subsp. saprophyticus (strain ATCC 15305 / DSM 20229 / NCIMB 8711 / NCTC 7292 / S-41) protein is UPF0178 protein SSP2038.